The primary structure comprises 384 residues: Queuine tRNA-ribosyltransferase (384 aa).

The active-site Proton acceptor is Asp92. Residues 92–96 (DSGGF), Asp146, Gln190, and Gly217 contribute to the substrate site. Residues 248–254 (GVGRPED) form an RNA binding region. Catalysis depends on Asp267, which acts as the Nucleophile. The RNA binding; important for wobble base 34 recognition stretch occupies residues 272-276 (TRHAR). Positions 305, 307, 310, and 337 each coordinate Zn(2+).

It belongs to the queuine tRNA-ribosyltransferase family. In terms of assembly, homodimer. Within each dimer, one monomer is responsible for RNA recognition and catalysis, while the other monomer binds to the replacement base PreQ1. Requires Zn(2+) as cofactor.

The enzyme catalyses 7-aminomethyl-7-carbaguanine + guanosine(34) in tRNA = 7-aminomethyl-7-carbaguanosine(34) in tRNA + guanine. Its pathway is tRNA modification; tRNA-queuosine biosynthesis. Catalyzes the base-exchange of a guanine (G) residue with the queuine precursor 7-aminomethyl-7-deazaguanine (PreQ1) at position 34 (anticodon wobble position) in tRNAs with GU(N) anticodons (tRNA-Asp, -Asn, -His and -Tyr). Catalysis occurs through a double-displacement mechanism. The nucleophile active site attacks the C1' of nucleotide 34 to detach the guanine base from the RNA, forming a covalent enzyme-RNA intermediate. The proton acceptor active site deprotonates the incoming PreQ1, allowing a nucleophilic attack on the C1' of the ribose to form the product. After dissociation, two additional enzymatic reactions on the tRNA convert PreQ1 to queuine (Q), resulting in the hypermodified nucleoside queuosine (7-(((4,5-cis-dihydroxy-2-cyclopenten-1-yl)amino)methyl)-7-deazaguanosine). This Xylella fastidiosa (strain 9a5c) protein is Queuine tRNA-ribosyltransferase.